A 284-amino-acid chain; its full sequence is RNase adapter protein RapZ (284 aa).

An ATP-binding site is contributed by 8 to 15; that stretch reads GRSGSGKS. Residue 56-59 participates in GTP binding; the sequence is DVRN. The RNA-binding stretch occupies residues 266 to 284; it reads RSRGKNVQSRHRTLEKRKS.

Belongs to the RapZ-like family. RapZ subfamily. As to quaternary structure, homotrimer.

Modulates the synthesis of GlmS, by affecting the processing and stability of the regulatory small RNA GlmZ. When glucosamine-6-phosphate (GlcN6P) concentrations are high in the cell, RapZ binds GlmZ and targets it to cleavage by RNase E. Consequently, GlmZ is inactivated and unable to activate GlmS synthesis. Under low GlcN6P concentrations, RapZ is sequestered and inactivated by an other regulatory small RNA, GlmY, preventing GlmZ degradation and leading to synthesis of GlmS. This is RNase adapter protein RapZ from Klebsiella pneumoniae (strain 342).